The sequence spans 251 residues: HTH-type transcriptional regulator UlaR (251 aa).

In terms of domain architecture, HTH deoR-type spans 3–58; the sequence is EAQRHQILLEMLAQLGFVTVEKVVERLGISPATARRDINKLDESGKLKKVRNGAEA. Positions 20–39 form a DNA-binding region, H-T-H motif; sequence VTVEKVVERLGISPATARRD.

Its subcellular location is the cytoplasm. Functionally, represses ulaG and the ulaABCDEF operon. This is HTH-type transcriptional regulator UlaR from Escherichia coli O127:H6 (strain E2348/69 / EPEC).